The chain runs to 76 residues: Immune protein Tsi5 (76 aa).

Transmembrane regions (helical) follow at residues 19-39 (LLMT…EWFF) and 43-63 (WVTV…LYLY).

It is found in the membrane. In terms of biological role, immunity protein that plays a role in preventing early activation of toxin Tse5. The sequence is that of Immune protein Tsi5 from Pseudomonas aeruginosa (strain ATCC 15692 / DSM 22644 / CIP 104116 / JCM 14847 / LMG 12228 / 1C / PRS 101 / PAO1).